Reading from the N-terminus, the 546-residue chain is Light-independent protochlorophyllide reductase subunit B (546 aa).

Aspartate 36 lines the [4Fe-4S] cluster pocket. Aspartate 287 acts as the Proton donor in catalysis. 422-423 (GL) contributes to the substrate binding site. The interval 443-501 (PSHLSAHRPTGEAVGDAVGEPPAAPRDQAAPAATLDGSAAQSDPARTTPPGAPSWEDSA) is disordered.

Belongs to the ChlB/BchB/BchZ family. In terms of assembly, protochlorophyllide reductase is composed of three subunits; BchL, BchN and BchB. Forms a heterotetramer of two BchB and two BchN subunits. Requires [4Fe-4S] cluster as cofactor.

It catalyses the reaction chlorophyllide a + oxidized 2[4Fe-4S]-[ferredoxin] + 2 ADP + 2 phosphate = protochlorophyllide a + reduced 2[4Fe-4S]-[ferredoxin] + 2 ATP + 2 H2O. It functions in the pathway porphyrin-containing compound metabolism; bacteriochlorophyll biosynthesis (light-independent). Component of the dark-operative protochlorophyllide reductase (DPOR) that uses Mg-ATP and reduced ferredoxin to reduce ring D of protochlorophyllide (Pchlide) to form chlorophyllide a (Chlide). This reaction is light-independent. The NB-protein (BchN-BchB) is the catalytic component of the complex. This chain is Light-independent protochlorophyllide reductase subunit B, found in Rhodospirillum rubrum (strain ATCC 11170 / ATH 1.1.1 / DSM 467 / LMG 4362 / NCIMB 8255 / S1).